Reading from the N-terminus, the 634-residue chain is Alpha-L-iduronidase (634 aa).

Positions 1–16 (MLTFFAAFLAAPLALA) are cleaved as a signal peptide. Positions 44, 46, and 48 each coordinate alpha-D-mannopyranose. Residue His-81 participates in alpha-L-iduronate binding. A glycan (N-linked (GlcNAc...) asparagine) is linked at Asn-100. Alpha-L-iduronate-binding residues include Asn-171 and Glu-172. The active-site Proton donor is Glu-172. Residues Asn-180 and Asn-233 are each glycosylated (N-linked (GlcNAc...) asparagine). Alpha-L-iduronate-binding residues include Lys-254, Glu-289, and Gly-295. Catalysis depends on Glu-289, which acts as the Nucleophile. Trp-296 lines the alpha-D-mannopyranose pocket. Residue Asn-326 is glycosylated (N-linked (GlcNAc...) asparagine). 2 residues coordinate alpha-L-iduronate: Asp-339 and Arg-353. 3 N-linked (GlcNAc...) asparagine glycosylation sites follow: Asn-362, Asn-405, and Asn-441. Cys-531 and Cys-567 are oxidised to a cystine.

It belongs to the glycosyl hydrolase 39 family. Monomer. Post-translationally, N-glycosylation contributes to substrate binding and is required for full enzymatic activity. Ubiquitous.

It localises to the lysosome. It carries out the reaction Hydrolysis of unsulfated alpha-L-iduronosidic linkages in dermatan sulfate.. The sequence is that of Alpha-L-iduronidase (Idua) from Mus musculus (Mouse).